The primary structure comprises 668 residues: MSNYSTNGSRKIRISNSDDDSRETRFSIQPRNSHKTKEERYRDKEKERDHERHHDRERRDDRYRKVDSRDHRDRNRRSPAGSRTYCRDEPDRRRNNHSDRNRRDRSSERDRDNRSSKSKTKSPDSLRSKSSRKSQTPNHLPDDGKLFDRILDPNYKKKEKTVMEVEDVEMSPVEMLDEEEVSTFTFDDACGPVRPSNEPEEKDYKSEGDPESRPATPKTPLTPDYLENTIVSLNETLSDDEDKGPDDKYGKTPDKEQWESMTENEQKLHRDAMKKRREQRHREAVSKLPVYYPGLRGCQHISEYVILNVIAEGTYGEVFRGKNTRTDEVVALKRFKMEKEKEGFPITALREINMLLKAGAHENIVNVKEILVGSTKTEVYMAMEYVEHDVKSLIDKMRSRNQRFKTGQQKTLMSQLLSGIEHMHKLWILHRDLKTSNLLISHSGILKIADFGLAREYGEARDIEKRMKLTPIVVTLWYRSPELLLEPKTYSTPVDMWSIGCIMAEFIMMKPMFQGDSEPNQVHQIFQMMGTPTEQIWPDIKELKVWNMVEFPPVKPGQLRRIFKGEKLVNETGFDLLNGMLCLNPANRLTASEALQHDWFSEHPKAVPPEDLPVYPAKSELNAAPPENRRKNRLEALLADEEPERAALLRQFNVKAEQLKPSGFQLRG.

The interval 1 to 265 is disordered; that stretch reads MSNYSTNGSR…EQWESMTENE (265 aa). Basic and acidic residues-rich tracts occupy residues 35–73, 85–127, and 140–163; these read KTKE…DHRD, YCRD…DSLR, and LPDD…KTVM. Residues 164-181 are compositionally biased toward acidic residues; sequence EVEDVEMSPVEMLDEEEV. Composition is skewed to basic and acidic residues over residues 197–212 and 245–265; these read NEPE…DPES and PDDK…TENE. Residues 304-600 form the Protein kinase domain; that stretch reads YVILNVIAEG…ASEALQHDWF (297 aa). Residues 310-318 and Lys-333 each bind ATP; that span reads IAEGTYGEV. The active-site Proton acceptor is the Asp-432.

This sequence belongs to the protein kinase superfamily. CMGC Ser/Thr protein kinase family. CDC2/CDKX subfamily. As to expression, expressed in somatic cells and at varying levels throughout the germline (at protein level). Highly expressed in the germ line of hermaphrodites (at protein level).

It is found in the nucleus. Its subcellular location is the cytoplasm. It catalyses the reaction L-seryl-[protein] + ATP = O-phospho-L-seryl-[protein] + ADP + H(+). It carries out the reaction L-threonyl-[protein] + ATP = O-phospho-L-threonyl-[protein] + ADP + H(+). Its function is as follows. Probable cyclin-dependent kinase whose activity is most likely regulated by the cyclin cyl-1/Cylin-L. Acts partially redundantly with cdk-11.1 to ensure embryonic viability. In contrast to cdk-11.1, not essential for male and female fertility. This Caenorhabditis elegans protein is Cyclin-dependent kinase 11.2.